The chain runs to 344 residues: Methionine import ATP-binding protein MetN (344 aa).

An ABC transporter domain is found at Ile2 to Ile241. Gly38 to Ser45 is an ATP binding site.

Belongs to the ABC transporter superfamily. Methionine importer (TC 3.A.1.24) family. In terms of assembly, the complex is composed of two ATP-binding proteins (MetN), two transmembrane proteins (MetI) and a solute-binding protein (MetQ).

The protein localises to the cell inner membrane. The enzyme catalyses L-methionine(out) + ATP + H2O = L-methionine(in) + ADP + phosphate + H(+). It carries out the reaction D-methionine(out) + ATP + H2O = D-methionine(in) + ADP + phosphate + H(+). Part of the ABC transporter complex MetNIQ involved in methionine import. Responsible for energy coupling to the transport system. The chain is Methionine import ATP-binding protein MetN from Aliivibrio fischeri (strain ATCC 700601 / ES114) (Vibrio fischeri).